Reading from the N-terminus, the 647-residue chain is Frizzled-1 (647 aa).

The first 69 residues, 1–69 (MAEEEAPKKS…WLLEAPLLLG (69 aa)), serve as a signal peptide directing secretion. The Extracellular portion of the chain corresponds to 73 to 322 (QAAGQGPGQG…PEELRFSRTW (250 aa)). The tract at residues 74–104 (AAGQGPGQGPGPGQQPPPPPQQQQSGQQYNG) is disordered. Positions 111–230 (PDHGYCQPIS…HGAGELCVGQ (120 aa)) constitute an FZ domain. 5 disulfides stabilise this stretch: Cys116-Cys177, Cys124-Cys170, Cys161-Cys198, Cys187-Cys227, and Cys191-Cys215. N-linked (GlcNAc...) asparagine glycosylation is present at Asn130. Residue Asn231 is glycosylated (N-linked (GlcNAc...) asparagine). Residues 323-343 (IGIWSVLCCASTLFTVLTYLV) form a helical membrane-spanning segment. The Cytoplasmic segment spans residues 344-354 (DMRRFSYPERP). Residues 355 to 375 (IIFLSGCYTAVAVAYIAGFLL) traverse the membrane as a helical segment. Over 376-402 (EDRVVCNDKFAEDGARTVAQGTKKEGC) the chain is Extracellular. A helical membrane pass occupies residues 403–423 (TILFMMLYFFSMASSIWWVIL). At 424-445 (SLTWFLAAGMKWGHEAIEANSQ) the chain is on the cytoplasmic side. Residues 446–466 (YFHLAAWAVPAIKTITILALG) form a helical membrane-spanning segment. Residues 467-489 (QVDGDVLSGVCFVGLNNVDALRG) lie on the Extracellular side of the membrane. The helical transmembrane segment at 490–510 (FVLAPLFVYLFIGTSFLLAGF) threads the bilayer. The Cytoplasmic portion of the chain corresponds to 511–536 (VSLFRIRTIMKHDGTKTEKLEKLMVR). A helical transmembrane segment spans residues 537-557 (IGVFSVLYTVPATIVIACYFY). Over 558–601 (EQAFRDQWERSWVAQSCKSYAIPCPHLQAGGGAPPHPPMSPDFT) the chain is Extracellular. The helical transmembrane segment at 602–622 (VFMIKYLMTLIVGITSGFWIW) threads the bilayer. The Cytoplasmic portion of the chain corresponds to 623–647 (SGKTLNSWRKFYTRLTNSKQGETTV). Positions 625 to 630 (KTLNSW) match the Lys-Thr-X-X-X-Trp motif, mediates interaction with the PDZ domain of Dvl family members motif. The PDZ-binding motif lies at 645 to 647 (TTV).

The protein belongs to the G-protein coupled receptor Fz/Smo family. Interacts with MYOC. Interacts with WNT7B. As to quaternary structure, (Microbial infection) Interacts with C.difficile toxin TcdB; frizzled receptors constitute the major host receptors for TcdB in the colonic epithelium. In terms of processing, ubiquitinated by ZNRF3, leading to its degradation by the proteasome. As to expression, expressed in adult heart, placenta, lung, kidney, pancreas, prostate, and ovary and in fetal lung and kidney.

It localises to the cell membrane. Functionally, receptor for Wnt proteins. Activated by WNT3A, WNT3, WNT1 and to a lesser extent WNT2, but apparently not by WNT4, WNT5A, WNT5B, WNT6, WNT7A or WNT7B. Contradictory results showing activation by WNT7B have been described for mouse. Functions in the canonical Wnt/beta-catenin signaling pathway. The canonical Wnt/beta-catenin signaling pathway leads to the activation of disheveled proteins, inhibition of GSK-3 kinase, nuclear accumulation of beta-catenin and activation of Wnt target genes. A second signaling pathway involving PKC and calcium fluxes has been seen for some family members, but it is not yet clear if it represents a distinct pathway or if it can be integrated in the canonical pathway, as PKC seems to be required for Wnt-mediated inactivation of GSK-3 kinase. Both pathways seem to involve interactions with G-proteins. May be involved in transduction and intercellular transmission of polarity information during tissue morphogenesis and/or in differentiated tissues. In terms of biological role, (Microbial infection) Acts as a receptor for C.difficile toxin TcdB in the colonic epithelium. The polypeptide is Frizzled-1 (FZD1) (Homo sapiens (Human)).